The following is a 474-amino-acid chain: Protein nucleotidyltransferase YdiU (474 aa).

The ATP site is built by Gly-89, Gly-91, Arg-92, Lys-112, Asp-124, Gly-125, Arg-175, and Arg-182. The active-site Proton acceptor is the Asp-256. Residues Asn-257 and Asp-266 each contribute to the Mg(2+) site. ATP is bound at residue Asp-266.

The protein belongs to the SELO family. The cofactor is Mg(2+). It depends on Mn(2+) as a cofactor.

It catalyses the reaction L-seryl-[protein] + ATP = 3-O-(5'-adenylyl)-L-seryl-[protein] + diphosphate. The catalysed reaction is L-threonyl-[protein] + ATP = 3-O-(5'-adenylyl)-L-threonyl-[protein] + diphosphate. The enzyme catalyses L-tyrosyl-[protein] + ATP = O-(5'-adenylyl)-L-tyrosyl-[protein] + diphosphate. It carries out the reaction L-histidyl-[protein] + UTP = N(tele)-(5'-uridylyl)-L-histidyl-[protein] + diphosphate. It catalyses the reaction L-seryl-[protein] + UTP = O-(5'-uridylyl)-L-seryl-[protein] + diphosphate. The catalysed reaction is L-tyrosyl-[protein] + UTP = O-(5'-uridylyl)-L-tyrosyl-[protein] + diphosphate. In terms of biological role, nucleotidyltransferase involved in the post-translational modification of proteins. It can catalyze the addition of adenosine monophosphate (AMP) or uridine monophosphate (UMP) to a protein, resulting in modifications known as AMPylation and UMPylation. The sequence is that of Protein nucleotidyltransferase YdiU from Corynebacterium glutamicum (strain ATCC 13032 / DSM 20300 / JCM 1318 / BCRC 11384 / CCUG 27702 / LMG 3730 / NBRC 12168 / NCIMB 10025 / NRRL B-2784 / 534).